A 147-amino-acid polypeptide reads, in one-letter code: Hemoglobin subunit gamma (147 aa).

The 145-residue stretch at 3-147 (HFTAEEKAAI…VANALAYKYH (145 aa)) folds into the Globin domain. Positions 64 and 93 each coordinate heme b.

The protein belongs to the globin family. Heterotetramer of two alpha chains and two gamma chains in fetal hemoglobin (Hb F). As to expression, red blood cells.

Its function is as follows. Gamma chains make up the fetal hemoglobin F, in combination with alpha chains. The chain is Hemoglobin subunit gamma (HBG) from Elephas maximus (Indian elephant).